The following is a 166-amino-acid chain: NADH-quinone oxidoreductase subunit B (166 aa).

[4Fe-4S] cluster is bound by residues Cys44, Cys45, Cys110, and Cys140.

It belongs to the complex I 20 kDa subunit family. NDH-1 is composed of 14 different subunits. Subunits NuoB, C, D, E, F, and G constitute the peripheral sector of the complex. [4Fe-4S] cluster serves as cofactor.

The protein localises to the cell membrane. The enzyme catalyses a quinone + NADH + 5 H(+)(in) = a quinol + NAD(+) + 4 H(+)(out). In terms of biological role, NDH-1 shuttles electrons from NADH, via FMN and iron-sulfur (Fe-S) centers, to quinones in the respiratory chain. The immediate electron acceptor for the enzyme in this species is believed to be a menaquinone. Couples the redox reaction to proton translocation (for every two electrons transferred, four hydrogen ions are translocated across the cytoplasmic membrane), and thus conserves the redox energy in a proton gradient. In Carboxydothermus hydrogenoformans (strain ATCC BAA-161 / DSM 6008 / Z-2901), this protein is NADH-quinone oxidoreductase subunit B.